Consider the following 334-residue polypeptide: Aspartate carbamoyltransferase catalytic subunit (334 aa).

Carbamoyl phosphate is bound by residues Arg-71 and Thr-72. L-aspartate is bound at residue Lys-99. Residues Arg-121, His-151, and Gln-154 each coordinate carbamoyl phosphate. Residues Arg-184 and Arg-239 each coordinate L-aspartate. Positions 280 and 281 each coordinate carbamoyl phosphate.

It belongs to the aspartate/ornithine carbamoyltransferase superfamily. ATCase family. As to quaternary structure, heterododecamer (2C3:3R2) of six catalytic PyrB chains organized as two trimers (C3), and six regulatory PyrI chains organized as three dimers (R2).

The catalysed reaction is carbamoyl phosphate + L-aspartate = N-carbamoyl-L-aspartate + phosphate + H(+). It functions in the pathway pyrimidine metabolism; UMP biosynthesis via de novo pathway; (S)-dihydroorotate from bicarbonate: step 2/3. Its function is as follows. Catalyzes the condensation of carbamoyl phosphate and aspartate to form carbamoyl aspartate and inorganic phosphate, the committed step in the de novo pyrimidine nucleotide biosynthesis pathway. This Pseudomonas fluorescens (strain ATCC BAA-477 / NRRL B-23932 / Pf-5) protein is Aspartate carbamoyltransferase catalytic subunit.